A 154-amino-acid polypeptide reads, in one-letter code: Yop proteins translocation protein O (154 aa).

The disordered stretch occupies residues 132 to 154 (ELNQQHYQEEQEQEEFLQHHRNA).

The protein belongs to the SpaM family.

Component of the yop secretion machinery. The polypeptide is Yop proteins translocation protein O (yscO) (Yersinia pseudotuberculosis serotype I (strain IP32953)).